We begin with the raw amino-acid sequence, 291 residues long: 33 kDa chaperonin (291 aa).

Cystine bridges form between C229–C231 and C262–C265.

Belongs to the HSP33 family. Under oxidizing conditions two disulfide bonds are formed involving the reactive cysteines. Under reducing conditions zinc is bound to the reactive cysteines and the protein is inactive.

It localises to the cytoplasm. Redox regulated molecular chaperone. Protects both thermally unfolding and oxidatively damaged proteins from irreversible aggregation. Plays an important role in the bacterial defense system toward oxidative stress. In Aliivibrio salmonicida (strain LFI1238) (Vibrio salmonicida (strain LFI1238)), this protein is 33 kDa chaperonin.